Here is a 220-residue protein sequence, read N- to C-terminus: Pyridoxine/pyridoxamine 5'-phosphate oxidase (220 aa).

Residues 8-11 (RKSY) and Lys66 contribute to the substrate site. FMN-binding positions include 61–66 (RVVLIK), 76–77 (FT), Arg82, and Lys83. Substrate contacts are provided by Tyr123, Arg127, and Ser131. Residues 140-141 (QS) and Trp184 each bind FMN. 190–192 (RLH) is a binding site for substrate. Arg194 serves as a coordination point for FMN.

The protein belongs to the pyridoxamine 5'-phosphate oxidase family. In terms of assembly, homodimer. Requires FMN as cofactor.

The catalysed reaction is pyridoxamine 5'-phosphate + O2 + H2O = pyridoxal 5'-phosphate + H2O2 + NH4(+). It catalyses the reaction pyridoxine 5'-phosphate + O2 = pyridoxal 5'-phosphate + H2O2. The protein operates within cofactor metabolism; pyridoxal 5'-phosphate salvage; pyridoxal 5'-phosphate from pyridoxamine 5'-phosphate: step 1/1. Its pathway is cofactor metabolism; pyridoxal 5'-phosphate salvage; pyridoxal 5'-phosphate from pyridoxine 5'-phosphate: step 1/1. Catalyzes the oxidation of either pyridoxine 5'-phosphate (PNP) or pyridoxamine 5'-phosphate (PMP) into pyridoxal 5'-phosphate (PLP). In Albidiferax ferrireducens (strain ATCC BAA-621 / DSM 15236 / T118) (Rhodoferax ferrireducens), this protein is Pyridoxine/pyridoxamine 5'-phosphate oxidase.